The chain runs to 42 residues: Photosystem I reaction center subunit IX (42 aa).

Residues Tyr7 to Ile27 form a helical membrane-spanning segment.

Belongs to the PsaJ family.

The protein localises to the plastid. The protein resides in the chloroplast thylakoid membrane. May help in the organization of the PsaE and PsaF subunits. This Nephroselmis olivacea (Green alga) protein is Photosystem I reaction center subunit IX.